The following is a 364-amino-acid chain: Protein FAM81A (364 aa).

3 coiled-coil regions span residues 75–107 (FLEE…RDNI), 158–189 (NKEQ…VDLS), and 261–287 (ANER…QKRN). The segment at 281 to 300 (EESQKRNAEGQRKPDEEKVH) is disordered.

Belongs to the FAM81 family. In terms of assembly, interacts with DLG4/PSD-95, GRIN2B/GLUN2B and SYNGAP1; the interactions facilitate condensate formation. Expressed in most regions of the brain (at protein level).

The protein localises to the postsynaptic density. Its subcellular location is the cytoplasm. Functionally, facilitates the interaction and assembly of proteins within the postsynaptic density by promoting the condensation of postsynaptic proteins via liquid-liquid phase separation. Required for neuronal activity. Accumulation at the postsynaptic density results in enlargement of dendritic spines. This is Protein FAM81A (Fam81a) from Mus musculus (Mouse).